Reading from the N-terminus, the 443-residue chain is UDP-N-acetylmuramate--L-alanine ligase (443 aa).

Gly110–Ser116 contacts ATP.

Belongs to the MurCDEF family.

Its subcellular location is the cytoplasm. It carries out the reaction UDP-N-acetyl-alpha-D-muramate + L-alanine + ATP = UDP-N-acetyl-alpha-D-muramoyl-L-alanine + ADP + phosphate + H(+). It participates in cell wall biogenesis; peptidoglycan biosynthesis. In terms of biological role, cell wall formation. The chain is UDP-N-acetylmuramate--L-alanine ligase from Streptococcus gordonii (strain Challis / ATCC 35105 / BCRC 15272 / CH1 / DL1 / V288).